Here is a 397-residue protein sequence, read N- to C-terminus: UDP-GlcNAc:betaGal beta-1,3-N-acetylglucosaminyltransferase 7 (397 aa).

Residues 1-6 are Cytoplasmic-facing; it reads MSLWKK. Residues 7-26 traverse the membrane as a helical; Signal-anchor for type II membrane protein segment; it reads TLYKSVCLALALLVAVTVFQ. The Lumenal segment spans residues 27–397; the sequence is RSVTPGQFLQ…LTCSLKFQVL (371 aa). Residues Asn-84, Asn-90, Asn-210, and Asn-387 are each glycosylated (N-linked (GlcNAc...) asparagine).

Belongs to the glycosyltransferase 31 family.

Its subcellular location is the golgi apparatus membrane. The protein operates within protein modification; protein glycosylation. In terms of biological role, N-acetyl glucosamine (GlcNAc) transferase that catalyzes the transfer of GlcNAc via a beta1-&gt;3 linkage from UDP-GlcNAc to the non-reducing terminal galactose (Gal) in the linearly growing chain of N- and O-linked keratan sulfate proteoglycans. Cooperates with B4GALT4 galactosyltransferase and CHST6 and CHST1 sulfotransferases to construct and elongate mono- and disulfated disaccharide units [-&gt;3Galbeta1-&gt;4(6-sulfoGlcNAcbeta)1-&gt;] and [-&gt;3(6-sulfoGalbeta)1-&gt;4(6-sulfoGlcNAcbeta)1-&gt;] within keratan sulfate polymer. Involved in biosynthesis of N-linked keratan sulfate proteoglycans in cornea, with an impact on proteoglycan fibril organization and corneal transparency. May play a role in the maintenance of tissue architecture by suppressing cellular motility and invasion. In Rattus norvegicus (Rat), this protein is UDP-GlcNAc:betaGal beta-1,3-N-acetylglucosaminyltransferase 7 (B3gnt7).